The sequence spans 232 residues: Ornithine carbamoyltransferase (232 aa).

Residues glutamine 15, arginine 39, and 66 to 69 (HPTQ) each bind carbamoyl phosphate. Residues asparagine 99, aspartate 163, and 167–168 (SM) contribute to the L-ornithine site. Residues 204 to 207 (HCLP) and threonine 232 each bind carbamoyl phosphate.

This sequence belongs to the aspartate/ornithine carbamoyltransferase superfamily. OTCase family.

It localises to the cytoplasm. The enzyme catalyses carbamoyl phosphate + L-ornithine = L-citrulline + phosphate + H(+). Its pathway is amino-acid biosynthesis; L-arginine biosynthesis; L-arginine from L-ornithine and carbamoyl phosphate: step 1/3. Reversibly catalyzes the transfer of the carbamoyl group from carbamoyl phosphate (CP) to the N(epsilon) atom of ornithine (ORN) to produce L-citrulline. The sequence is that of Ornithine carbamoyltransferase (argF) from Neisseria flava.